A 1249-amino-acid chain; its full sequence is Clustered mitochondria protein homolog (1249 aa).

The interval 1–34 (MAQTNGELEHSKAETPEQLTNGNHPEETQEEEQN) is disordered. The Clu domain maps to 321–565 (DITRSQENYL…RVTPLDVMWQ (245 aa)). Disordered regions lie at residues 610-638 (VETA…EALD) and 874-907 (VPAT…PEKP). Residues 613-638 (ASKEKSEENAESKEEGSEEKSEEALD) are compositionally biased toward basic and acidic residues. TPR repeat units follow at residues 975–1008 (AKLY…TERT), 1017–1050 (ILSY…WKII), and 1059–1092 (ITTM…CESL). The span at 1178–1191 (TRTLGTKVQPQVGQ) shows a compositional bias: polar residues. The disordered stretch occupies residues 1178-1249 (TRTLGTKVQP…KLRGSKKSSA (72 aa)). The segment covering 1192–1205 (SAPSASGASSANPS) has biased composition (low complexity).

Belongs to the CLU family. In terms of assembly, may associate with the eukaryotic translation initiation factor 3 (eIF-3) complex.

Its subcellular location is the cytoplasm. In terms of biological role, mRNA-binding protein involved in proper cytoplasmic distribution of mitochondria. In Aspergillus oryzae (strain ATCC 42149 / RIB 40) (Yellow koji mold), this protein is Clustered mitochondria protein homolog.